Reading from the N-terminus, the 150-residue chain is CASP-like protein 2 (150 aa).

The Cytoplasmic segment spans residues 1-17; the sequence is MKPEAGDGRSGWRWVAT. The chain crosses the membrane as a helical span at residues 18–38; that stretch reads FDLILRLAAIVATSTAVLAAM. Topologically, residues 39 to 41 are extracellular; the sequence is GKT. The helical transmembrane segment at 42–62 threads the bilayer; the sequence is FVVVVNGVACFYLLMSLPVSI. At 63 to 82 the chain is on the cytoplasmic side; that stretch reads FNIMRPGACPANRAVLTALD. Residues 83–103 form a helical membrane-spanning segment; sequence MVTVALVTAGALVAGILYLVH. The Extracellular segment spans residues 104–121; it reads KAGDTHADWFSIWSQLDS. The chain crosses the membrane as a helical span at residues 122–142; the sequence is LSYLAVLALILHVLLSGSILY. At 143 to 150 the chain is on the cytoplasmic side; that stretch reads KQALNIMF.

It belongs to the Casparian strip membrane proteins (CASP) family. In terms of assembly, homodimer and heterodimers.

Its subcellular location is the cell membrane. The protein is CASP-like protein 2 of Picea sitchensis (Sitka spruce).